The sequence spans 485 residues: Warthog protein 1 (485 aa).

A signal peptide spans 1 to 21; that stretch reads MMVMNPLTATFLAALIGTAAS. The disordered stretch occupies residues 236–258; the sequence is DQRLSPSTDVQSDSYVSPTEADP. Positions 239 to 252 are enriched in polar residues; sequence LSPSTDVQSDSYVS.

It belongs to the hedgehog family. The C-terminal domain displays an autoproteolysis activity.

It is found in the secreted. Its subcellular location is the cell surface. The protein resides in the cell membrane. It localises to the extracellular space. Functionally, intercellular signal essential for a variety of patterning events during development. This chain is Warthog protein 1 (wrt-1), found in Caenorhabditis elegans.